The following is a 198-amino-acid chain: Suppressor of cytokine signaling 2 (198 aa).

A disordered region spans residues 1 to 29; the sequence is MTLRCLEPSGNGADRTRSQWGTAGLPEEQ. Positions 1 to 75 are interaction with AREL1; it reads MTLRCLEPSG…PEGTFLIRDS (75 aa). At serine 30 the chain carries Phosphoserine. Positions 48–156 constitute an SH2 domain; sequence WYWGSMTVNE…TVHLYLTKPL (109 aa). Serine 52 is modified (phosphoserine; by PKC). The SOCS box domain maps to 151-197; the sequence is YLTKPLYTSAPTLQHFCRLAINKCTGTIWGLPLPTRLKDYLEEYKFQ. Lysine 173 participates in a covalent cross-link: Glycyl lysine isopeptide (Lys-Gly) (interchain with G-Cter in ubiquitin).

In terms of assembly, substrate-recognition component of the ECS(SOCS2) complex, composed of SOCS2, CUL5, ELOB, ELOC and RNF7/RBX2. Interacts with IGF1R. Interacts with DCUN1D1. In terms of processing, ubiquitinated; mediated by AREL1 and leading to its subsequent proteasomal degradation. Ubiquitination is dependent on phosphorylation at Ser-52, by PKC and is stimulated by LPS. Post-translationally, phosphorylation at Ser-52 by PKC facilitates its ubiquitination and proteasomal degradation. Expressed primarily in the testis, some expression in liver and lung.

Its subcellular location is the cytoplasm. Its pathway is protein modification; protein ubiquitination. Functionally, substrate-recognition component of a cullin-5-RING E3 ubiquitin-protein ligase complex (ECS complex, also named CRL5 complex), which mediates the ubiquitination and subsequent proteasomal degradation of target proteins, such as EPOR and GHR. Specifically recognizes and binds phosphorylated proteins via its SH2 domain, promoting their ubiquitination. The ECS(SOCS2) complex acts as a key regulator of growth hormone receptor (GHR) levels by mediating ubiquitination and degradation of GHR, following GHR phosphorylation by JAK2. The ECS(SOCS2) also catalyzes ubiquitination and degradation of JAK2-phosphorylated EPOR. This is Suppressor of cytokine signaling 2 from Mus musculus (Mouse).